The sequence spans 407 residues: Proteasome-activating nucleotidase (407 aa).

Positions 22–67 (KEKTQIAELESKVLRLELKNKDINRENVQIKKENEILKRELDKLRI) form a coiled coil. Residues 192–197 (GTGKTL) and His331 contribute to the ATP site. A docks into pockets in the proteasome alpha-ring to cause gate opening region spans residues 405–407 (MYG).

This sequence belongs to the AAA ATPase family. In terms of assembly, homohexamer. The hexameric complex has a two-ring architecture resembling a top hat that caps the 20S proteasome core at one or both ends. Upon ATP-binding, the C-terminus of PAN interacts with the alpha-rings of the proteasome core by binding to the intersubunit pockets.

The protein resides in the cytoplasm. Functionally, ATPase which is responsible for recognizing, binding, unfolding and translocation of substrate proteins into the archaeal 20S proteasome core particle. Is essential for opening the gate of the 20S proteasome via an interaction with its C-terminus, thereby allowing substrate entry and access to the site of proteolysis. Thus, the C-termini of the proteasomal ATPase function like a 'key in a lock' to induce gate opening and therefore regulate proteolysis. Unfolding activity requires energy from ATP hydrolysis, whereas ATP binding alone promotes ATPase-20S proteasome association which triggers gate opening, and supports translocation of unfolded substrates. The protein is Proteasome-activating nucleotidase of Methanococcus maripaludis (strain DSM 14266 / JCM 13030 / NBRC 101832 / S2 / LL).